The chain runs to 218 residues: Small ribosomal subunit protein uS3 (218 aa).

The KH type-2 domain maps to 38-106; sequence IREYISKRLQ…RVHINIVEIK (69 aa).

It belongs to the universal ribosomal protein uS3 family. Part of the 30S ribosomal subunit. Forms a tight complex with proteins S10 and S14.

Its function is as follows. Binds the lower part of the 30S subunit head. Binds mRNA in the 70S ribosome, positioning it for translation. This Geobacillus kaustophilus (strain HTA426) protein is Small ribosomal subunit protein uS3.